The primary structure comprises 252 residues: 2-succinyl-6-hydroxy-2,4-cyclohexadiene-1-carboxylate synthase (252 aa).

Belongs to the AB hydrolase superfamily. MenH family. In terms of assembly, monomer.

The enzyme catalyses 5-enolpyruvoyl-6-hydroxy-2-succinyl-cyclohex-3-ene-1-carboxylate = (1R,6R)-6-hydroxy-2-succinyl-cyclohexa-2,4-diene-1-carboxylate + pyruvate. Its pathway is quinol/quinone metabolism; 1,4-dihydroxy-2-naphthoate biosynthesis; 1,4-dihydroxy-2-naphthoate from chorismate: step 3/7. It participates in quinol/quinone metabolism; menaquinone biosynthesis. Functionally, catalyzes a proton abstraction reaction that results in 2,5-elimination of pyruvate from 2-succinyl-5-enolpyruvyl-6-hydroxy-3-cyclohexene-1-carboxylate (SEPHCHC) and the formation of 2-succinyl-6-hydroxy-2,4-cyclohexadiene-1-carboxylate (SHCHC). This chain is 2-succinyl-6-hydroxy-2,4-cyclohexadiene-1-carboxylate synthase, found in Escherichia coli O17:K52:H18 (strain UMN026 / ExPEC).